The chain runs to 149 residues: UPF0260 protein Pfl01_1392 (149 aa).

The protein belongs to the UPF0260 family.

This is UPF0260 protein Pfl01_1392 from Pseudomonas fluorescens (strain Pf0-1).